The following is a 480-amino-acid chain: MTDTTPSADLGASSQQPAKAWSGRFSEPVSDLVKRYTASVFFDNRMAEQDIRGSLAHAKMLARQGIIGAQDLADIERGMAQIKGEIERGEFNWNLDDEDVHLNIEKRLTALVGDAGKRLHTGRSRNDQVATDIRLWLRDAIDQILALIGDFQKNLLDVAEANAATPMPGFTHLQVAQPVTFGHHLMAYFEMTRRDAERFADCRKRVNRLPLGSAALAGTSYPIDREFVARELGFDEVCYNSLDAVSDRDFAIEFCAASSLLMTHLSRFSEELILWMSPRFGFIDLADRFCTGSSIMPQKKNPDVPELVRGKTGRVNGSLIALLTLMKGQPLAYNKDNQEDKEPLFDTADTVIDTLRIYADMITGIRVKADNMRGALTQGYATATDLADYLVKKGLPFRDAHEAVALAVRAAEVRGCDLPQFSLDELRAAMAHVPGAADKLADDIFGVLTVEGSLDSRNHIGGTAPAQVLAAVAHARTRLG.

The span at 1 to 17 shows a compositional bias: polar residues; sequence MTDTTPSADLGASSQQP. A disordered region spans residues 1-24; it reads MTDTTPSADLGASSQQPAKAWSGR.

This sequence belongs to the lyase 1 family. Argininosuccinate lyase subfamily.

It is found in the cytoplasm. It carries out the reaction 2-(N(omega)-L-arginino)succinate = fumarate + L-arginine. Its pathway is amino-acid biosynthesis; L-arginine biosynthesis; L-arginine from L-ornithine and carbamoyl phosphate: step 3/3. The polypeptide is Argininosuccinate lyase (Azoarcus sp. (strain BH72)).